Consider the following 513-residue polypeptide: Maturase K (513 aa).

It belongs to the intron maturase 2 family. MatK subfamily.

It localises to the plastid. It is found in the chloroplast. In terms of biological role, usually encoded in the trnK tRNA gene intron. Probably assists in splicing its own and other chloroplast group II introns. This Typha latifolia (Bulrush) protein is Maturase K.